The following is a 554-amino-acid chain: Protein NODULATION SIGNALING PATHWAY 1 (554 aa).

The disordered stretch occupies residues 76–165 (TTSTTSLEPN…NSNNGNNKDG (90 aa)). Over residues 82–91 (LEPNSFNNIP) the composition is skewed to polar residues. Over residues 95 to 107 (LPKKRNAEDELSL) the composition is skewed to basic and acidic residues. Residues 150 to 162 (AKANGSNSNNGNN) are compositionally biased toward low complexity. In terms of domain architecture, GRAS spans 159 to 548 (NGNNKDGRWA…QPVSFCSLWK (390 aa)). The tract at residues 166-227 (RWAEQLLNPC…HHLSSSSSST (62 aa)) is leucine repeat I (LRI). Positions 246–315 (LLKFYEFSPW…GGPPPLVRLT (70 aa)) are VHIID. Positions 281–285 (LHILD) match the VHIID motif. A leucine repeat II (LRII) region spans residues 331-373 (TPFSIGPCGDTFSSGLLGYAQSLNVNLQIKKLDNHPLQTLNAK). The interval 383–468 (LIVCAQFRLH…RDSDERKMME (86 aa)) is PFYRE. The tract at residues 471–548 (AAKALTNQRE…QPVSFCSLWK (78 aa)) is SAW.

It belongs to the GRAS family. As to expression, expressed in epidermal and cortical root cells.

It localises to the nucleus. Its function is as follows. Transcriptional regulator essential for Nod-factor-induced gene expression. Acts downstream of calcium spiking. May be a target of DMI3, a calcium/calmodulin-dependent protein kinase (CCaMK). Is essential for Nod factor-elicited expression of ERN1. Transcription factor involved in the control of strigolactone biosynthesis in roots through the activation of the beta-carotene isomerase D27, which participates in a pathway leading to biosynthesis of strigolactones. The sequence is that of Protein NODULATION SIGNALING PATHWAY 1 from Medicago truncatula (Barrel medic).